Reading from the N-terminus, the 522-residue chain is Sensory neuron membrane protein 1 (522 aa).

Topologically, residues 1-11 are cytoplasmic; the sequence is MQLAKPLKYAA. A helical transmembrane segment spans residues 12–32; sequence ISGIVAFVGLMFGWVIFPAIL. At 33-458 the chain is on the extracellular side; that stretch reads KSQLKKEMAL…SQLFIPKRVV (426 aa). N-linked (GlcNAc...) asparagine glycans are attached at residues N67, N105, and N229. Disulfide bonds link C268-C333, C297-C352, and C335-C341. The N-linked (GlcNAc...) asparagine glycan is linked to N440. Residues 459 to 479 form a helical membrane-spanning segment; it reads SVVCWCMISFGSLGVIAAVIF. The Cytoplasmic segment spans residues 480–522; it reads HFKGDIMHLAVAGDNSVSKIKPENDENKEVGVMGQNQEPAKVM. Residues 500–522 are disordered; sequence KPENDENKEVGVMGQNQEPAKVM. The span at 513 to 522 shows a compositional bias: polar residues; that stretch reads GQNQEPAKVM.

Belongs to the CD36 family. As to expression, principal component of the olfactory cilia membrane. Detected in both male and female antennae but not present in leg, abdomen, thorax or head.

It is found in the cell membrane. Functionally, plays an olfactory role that is not restricted to pheromone sensitivity. This Bombyx mori (Silk moth) protein is Sensory neuron membrane protein 1.